Consider the following 123-residue polypeptide: Large ribosomal subunit protein bL12 (123 aa).

Belongs to the bacterial ribosomal protein bL12 family. As to quaternary structure, homodimer. Part of the ribosomal stalk of the 50S ribosomal subunit. Forms a multimeric L10(L12)X complex, where L10 forms an elongated spine to which 2 to 4 L12 dimers bind in a sequential fashion. Binds GTP-bound translation factors.

Functionally, forms part of the ribosomal stalk which helps the ribosome interact with GTP-bound translation factors. Is thus essential for accurate translation. This chain is Large ribosomal subunit protein bL12, found in Zymomonas mobilis subsp. mobilis (strain ATCC 31821 / ZM4 / CP4).